Consider the following 312-residue polypeptide: MSVVDQKAVELPPRISEAGVADYFALLKPRVMSLVIFTALVGLMIAPGHIHPVLGFIAILCIAVGAGASGALNMALEGDIDVLMSRTANRPIPRGRITRGEAMGFGLTLSFFSVMTLGALVNWYAGGLLAFTIFFYVVIYTMGLKRRTAQNIVIGGAAGALPPVVAWAAATGSLSVEPLLLFLIIFFWTPPHFWALALFRSDDYARAGVPMLPVVAGPDATRLQILLYTIVLVAIAAAPWPLGYFDWVYGVTSLILGAGMLVLAIEVYRHRTGSQALRATRRLFAFSILYLFALFAVLLLDVVAKAVAPLIW.

8 helical membrane passes run 31–51, 52–72, 119–139, 152–172, 179–199, 225–245, 247–267, and 283–303; these read VMSL…GHIH, PVLG…SGAL, ALVN…YVVI, IVIG…AATG, LLLF…LALF, ILLY…LGYF, WVYG…AIEV, and LFAF…LDVV.

The protein belongs to the UbiA prenyltransferase family. Protoheme IX farnesyltransferase subfamily.

It localises to the cell inner membrane. It catalyses the reaction heme b + (2E,6E)-farnesyl diphosphate + H2O = Fe(II)-heme o + diphosphate. It functions in the pathway porphyrin-containing compound metabolism; heme O biosynthesis; heme O from protoheme: step 1/1. Functionally, converts heme B (protoheme IX) to heme O by substitution of the vinyl group on carbon 2 of heme B porphyrin ring with a hydroxyethyl farnesyl side group. This chain is Protoheme IX farnesyltransferase 2, found in Nitrobacter winogradskyi (strain ATCC 25391 / DSM 10237 / CIP 104748 / NCIMB 11846 / Nb-255).